The chain runs to 297 residues: Vacuolar protein sorting-associated protein 26 (297 aa).

It belongs to the VPS26 family. In terms of assembly, component of the retromer complex, composed of VPS26, VPS29 and VPS35. As part of the retromer complex, interacts with the sorting receptor SORTLR/sortilin. Interacts with GTPase RAB7.

Functionally, plays a role in vesicular protein sorting. Component of the membrane-associated retromer complex which is essential in endosome-to-Golgi retrograde transport. This Plasmodium falciparum (isolate 3D7) protein is Vacuolar protein sorting-associated protein 26.